We begin with the raw amino-acid sequence, 742 residues long: Phosphoribosylformylglycinamidine synthase subunit PurL (742 aa).

The active site involves His53. Tyr56 and Lys95 together coordinate ATP. Position 97 (Glu97) interacts with Mg(2+). Substrate contacts are provided by residues 98–101 and Arg120; that span reads SHNH. The active-site Proton acceptor is His99. Asp121 contacts Mg(2+). Gln244 is a binding site for substrate. A Mg(2+)-binding site is contributed by Asp274. 318–320 serves as a coordination point for substrate; sequence ESQ. ATP is bound by residues Asp501 and Gly538. Residue Asn539 coordinates Mg(2+). Ser541 serves as a coordination point for substrate.

It belongs to the FGAMS family. In terms of assembly, monomer. Part of the FGAM synthase complex composed of 1 PurL, 1 PurQ and 2 PurS subunits.

The protein localises to the cytoplasm. The enzyme catalyses N(2)-formyl-N(1)-(5-phospho-beta-D-ribosyl)glycinamide + L-glutamine + ATP + H2O = 2-formamido-N(1)-(5-O-phospho-beta-D-ribosyl)acetamidine + L-glutamate + ADP + phosphate + H(+). It participates in purine metabolism; IMP biosynthesis via de novo pathway; 5-amino-1-(5-phospho-D-ribosyl)imidazole from N(2)-formyl-N(1)-(5-phospho-D-ribosyl)glycinamide: step 1/2. Its function is as follows. Part of the phosphoribosylformylglycinamidine synthase complex involved in the purines biosynthetic pathway. Catalyzes the ATP-dependent conversion of formylglycinamide ribonucleotide (FGAR) and glutamine to yield formylglycinamidine ribonucleotide (FGAM) and glutamate. The FGAM synthase complex is composed of three subunits. PurQ produces an ammonia molecule by converting glutamine to glutamate. PurL transfers the ammonia molecule to FGAR to form FGAM in an ATP-dependent manner. PurS interacts with PurQ and PurL and is thought to assist in the transfer of the ammonia molecule from PurQ to PurL. In Limosilactobacillus reuteri (strain DSM 20016) (Lactobacillus reuteri), this protein is Phosphoribosylformylglycinamidine synthase subunit PurL.